The sequence spans 479 residues: Ribulose bisphosphate carboxylase large chain (479 aa).

The propeptide occupies 1 to 2 (MS). Position 3 is an N-acetylproline (P3). Position 14 is an N6,N6,N6-trimethyllysine (K14). Substrate-binding residues include N123 and T173. K175 (proton acceptor) is an active-site residue. K177 lines the substrate pocket. The Mg(2+) site is built by K201, D203, and E204. The residue at position 201 (K201) is an N6-carboxylysine. The Proton acceptor role is filled by H294. Substrate is bound by residues R295, H327, and S379.

Belongs to the RuBisCO large chain family. Type I subfamily. As to quaternary structure, heterohexadecamer of 8 large chains and 8 small chains. It depends on Mg(2+) as a cofactor.

The protein resides in the plastid. It localises to the chloroplast. It catalyses the reaction 2 (2R)-3-phosphoglycerate + 2 H(+) = D-ribulose 1,5-bisphosphate + CO2 + H2O. The enzyme catalyses D-ribulose 1,5-bisphosphate + O2 = 2-phosphoglycolate + (2R)-3-phosphoglycerate + 2 H(+). Functionally, ruBisCO catalyzes two reactions: the carboxylation of D-ribulose 1,5-bisphosphate, the primary event in carbon dioxide fixation, as well as the oxidative fragmentation of the pentose substrate in the photorespiration process. Both reactions occur simultaneously and in competition at the same active site. In Jasminum nudiflorum (Winter jasmine), this protein is Ribulose bisphosphate carboxylase large chain.